A 254-amino-acid chain; its full sequence is Phosphoribosylaminoimidazole-succinocarboxamide synthase (254 aa).

It belongs to the SAICAR synthetase family.

The catalysed reaction is 5-amino-1-(5-phospho-D-ribosyl)imidazole-4-carboxylate + L-aspartate + ATP = (2S)-2-[5-amino-1-(5-phospho-beta-D-ribosyl)imidazole-4-carboxamido]succinate + ADP + phosphate + 2 H(+). It participates in purine metabolism; IMP biosynthesis via de novo pathway; 5-amino-1-(5-phospho-D-ribosyl)imidazole-4-carboxamide from 5-amino-1-(5-phospho-D-ribosyl)imidazole-4-carboxylate: step 1/2. The sequence is that of Phosphoribosylaminoimidazole-succinocarboxamide synthase from Gluconacetobacter diazotrophicus (strain ATCC 49037 / DSM 5601 / CCUG 37298 / CIP 103539 / LMG 7603 / PAl5).